A 282-amino-acid chain; its full sequence is Pantothenate synthetase (282 aa).

30-37 provides a ligand contact to ATP; sequence MGYLHEGH. The active-site Proton donor is the His37. Gln61 provides a ligand contact to (R)-pantoate. Gln61 is a beta-alanine binding site. 147–150 contacts ATP; the sequence is GQKD. Gln153 is a (R)-pantoate binding site. ATP is bound by residues Val176 and 184-187; that span reads LSSR.

The protein belongs to the pantothenate synthetase family. In terms of assembly, homodimer.

It localises to the cytoplasm. It carries out the reaction (R)-pantoate + beta-alanine + ATP = (R)-pantothenate + AMP + diphosphate + H(+). It participates in cofactor biosynthesis; (R)-pantothenate biosynthesis; (R)-pantothenate from (R)-pantoate and beta-alanine: step 1/1. Its function is as follows. Catalyzes the condensation of pantoate with beta-alanine in an ATP-dependent reaction via a pantoyl-adenylate intermediate. This chain is Pantothenate synthetase, found in Desulfitobacterium hafniense (strain DSM 10664 / DCB-2).